A 312-amino-acid polypeptide reads, in one-letter code: Isochorismatase (312 aa).

One can recognise a Carrier domain in the interval Val-229 to Ser-302. The residue at position 263 (Ser-263) is an O-(pantetheine 4'-phosphoryl)serine.

Belongs to the isochorismatase family.

It catalyses the reaction isochorismate + H2O = (2S,3S)-2,3-dihydroxy-2,3-dihydrobenzoate + pyruvate. It participates in siderophore biosynthesis; bacillibactin biosynthesis. The protein is Isochorismatase (dhbB) of Bacillus subtilis (strain 168).